Here is a 253-residue protein sequence, read N- to C-terminus: uncharacterized protein (253 aa).

Positions 1–16 are cleaved as a signal peptide; the sequence is MCVVYRTSVLILLASG. Cys17 is lipidated: N-palmitoyl cysteine. A lipid anchor (S-diacylglycerol cysteine) is attached at Cys17.

It belongs to the staphylococcal tandem lipoprotein family.

The protein resides in the cell membrane. This is an uncharacterized protein from Staphylococcus aureus (strain N315).